Reading from the N-terminus, the 1168-residue chain is MTILTTLIKEDNHFQDLNQVFGQANTLVTGLSPSAKVTMIAEKYAQSNQQLLLITNNLYQADKLETDLLQFIDAEELYKYPVQDIMTEEFSTQSPQLMSERIRTLTALAQGKKGLFIVPLNGLKKWLTPVEMWQNHQMTLRVGEDIDVDQFLNKLVNMGYKRESVVSHIGEFSLRGGIIDIFPLIGEPIRIELFDTEIDSIRDFDVETQRSKDNVEEVDITTASDYIITEEVISHLKEELKTAYENTRPKIDKSVRNDLKETYESFKLFESTYFDHQILRRLVAFMYETPSTIIEYFQKDAIIAVDEFNRIKETEESLTVESDSFISNIIESGNGFIGQSFIKYDDFETLIEGYPVTYFSLFATTMPIKLNHIIKFSCKPVQQFYGQYDIMRSEFQRYVNQNYHIVVLVETETKVERMQAMLSEMHIPSITKLHRSMSSGQAVIIEGSLSEGFELPDMGLVVITERELFKSKQKKQRKRTKAISNAEKIKSYQDLNVGDYIVHVHHGVGRYLGVETLEVGQTHRDYIKLQYKGTDQLFVPVDQMDQVQKYVASEDKTPKLNKLGGSEWKKTKAKVQQSVEDIAEELIDLYKEREMAEGYQYGEDTAEQTTFELDFPYELTPDQAKSIDEIKDDMQKSRPMDRLLCGDVGYGKTEVAVRAAFKAVMEGKQVAFLVPTTILAQQHYETLIERMQDFPVEIQLMSRFRTPKEIKQTKEGLKTGFVDIVVGTHKLLSKDIQYKDLGLLIVDEEQRFGVRHKERIKTLKHNVDVLTLTATPIPRTLHMSMLGVRDLSVIETPPENRFPVQTYVLEQNMSFIKEALERELSRDGQVFYLYNKVQSIYEKREQLQMLMPDANIAVAHGQMTERDLEETMLSFINNEYDILVTTTIIETGVDVPNANTLIIEDADRFGLSQLYQLRGRVGRSSRIGYAYFLHPANKVLTETAEDRLQAIKEFTELGSGFKIAMRDLNIRGAGNLLGKQQHGFIDTVGFDLYSQMLEEAVNEKRGIKEPESEVPEVEVDLNLDAYLPTEYIANEQAKIEIYKKLRKTETFDQIIDIKDELIDRFNDYPVEVARLLDIVEIKVHALHSGITLIKDKGKIIDIHLSVKATENIDGEVLFKATQPLGRTMKVGVQNNAMTITLTKQNQWLDSLKFLVKCIEESMRISDEA.

The Helicase ATP-binding domain maps to D633–I794. G646–T653 contributes to the ATP binding site. The DEEQ box signature appears at D747–Q750. Positions V808 to N969 constitute a Helicase C-terminal domain.

This sequence in the N-terminal section; belongs to the UvrB family. It in the C-terminal section; belongs to the helicase family. RecG subfamily.

Its subcellular location is the cytoplasm. Its function is as follows. Couples transcription and DNA repair by recognizing RNA polymerase (RNAP) stalled at DNA lesions. Mediates ATP-dependent release of RNAP and its truncated transcript from the DNA, and recruitment of nucleotide excision repair machinery to the damaged site. This chain is Transcription-repair-coupling factor, found in Staphylococcus aureus (strain USA300).